The chain runs to 348 residues: Spermidine/putrescine import ATP-binding protein PotA (348 aa).

The region spanning 6–236 is the ABC transporter domain; it reads IRLVNVTKEY…PKNVFVADFI (231 aa). 38 to 45 is a binding site for ATP; it reads GPSGCGKT.

The protein belongs to the ABC transporter superfamily. Spermidine/putrescine importer (TC 3.A.1.11.1) family. The complex is composed of two ATP-binding proteins (PotA), two transmembrane proteins (PotB and PotC) and a solute-binding protein (PotD).

Its subcellular location is the cell membrane. It carries out the reaction ATP + H2O + polyamine-[polyamine-binding protein]Side 1 = ADP + phosphate + polyamineSide 2 + [polyamine-binding protein]Side 1.. In terms of biological role, part of the ABC transporter complex PotABCD involved in spermidine/putrescine import. Responsible for energy coupling to the transport system. The protein is Spermidine/putrescine import ATP-binding protein PotA of Desulfitobacterium hafniense (strain Y51).